The primary structure comprises 93 residues: Small ribosomal subunit protein bS20c (93 aa).

Belongs to the bacterial ribosomal protein bS20 family.

Its subcellular location is the plastid. The protein localises to the chloroplast. Functionally, binds directly to 16S ribosomal RNA. The polypeptide is Small ribosomal subunit protein bS20c (Trieres chinensis (Marine centric diatom)).